The chain runs to 248 residues: Probable transcriptional regulatory protein LAR_0538 (248 aa).

A disordered region spans residues 1 to 22; that stretch reads MSGHSKWHNIQGRKNAQDAKRG.

It belongs to the TACO1 family.

Its subcellular location is the cytoplasm. This is Probable transcriptional regulatory protein LAR_0538 from Limosilactobacillus reuteri subsp. reuteri (strain JCM 1112) (Lactobacillus reuteri).